The following is a 528-amino-acid chain: Catalase (528 aa).

A compositionally biased stretch (basic and acidic residues) spans 1-22 (MADRREKSADQMKLWKESRANQ). The tract at residues 1–32 (MADRREKSADQMKLWKESRANQKPDVLTTGGG) is disordered. Residues histidine 75 and asparagine 148 contribute to the active site. Positions 194, 201, 203, 213, 237, 303, 305, and 306 each coordinate NADP(+). A heme-binding site is contributed by tyrosine 358. The Microbody targeting signal; atypical signature appears at 525-528 (KANL).

This sequence belongs to the catalase family. In terms of assembly, homotetramer. It depends on heme as a cofactor. Requires NADP(+) as cofactor.

It is found in the peroxisome matrix. The enzyme catalyses 2 H2O2 = O2 + 2 H2O. Catalyzes the degradation of hydrogen peroxide (H(2)O(2)) generated by peroxisomal oxidases to water and oxygen, thereby protecting cells from the toxic effects of hydrogen peroxide. In Glandirana rugosa (Japanese wrinkled frog), this protein is Catalase (cat).